The chain runs to 1291 residues: GRB10-interacting GYF protein 2 (1291 aa).

A2 is subject to N-acetylalanine. Phosphoserine is present on residues S19, S26, and S30. R107, R119, and R121 each carry omega-N-methylarginine. Positions 112-132 are disordered; that stretch reads GTVVGAPRGRSSSRGRGRGRG. S140 is modified (phosphoserine). 3 disordered regions span residues 148 to 196, 209 to 248, and 267 to 484; these read FGRG…RKHE, REEQNGEDEDGGWRLAGSRRDGERWRPHSPDGPRSTGWRE, and RGYR…TEPD. R150 carries the post-translational modification Omega-N-methylarginine. The segment covering 152-183 has biased composition (basic and acidic residues); the sequence is GGREMHRSQSWEERGDRRFEKPGRKDVGRPNF. Residues S161, S190, and S237 each carry the phosphoserine modification. Residues 226 to 248 show a composition bias toward basic and acidic residues; that stretch reads SRRDGERWRPHSPDGPRSTGWRE. The DDX6 binding motif motif lies at 281-311; sequence DDRDSLPEWCLEDAEEEMGTFDSSGAFLSLK. Residues 290–299 are compositionally biased toward acidic residues; the sequence is CLEDAEEEMG. A compositionally biased stretch (basic and acidic residues) spans 313-364; the sequence is VQKEPIPEEQEMDFRPVEEGEERSDSDSSHNEEAKEPDKTNRREGEKTDRAG. Positions 371-393 are enriched in polar residues; that stretch reads VPQTSLSSARPGTPSDHQPQEAT. T383 is modified (phosphothreonine). A compositionally biased stretch (basic and acidic residues) spans 394–415; sequence QFERKDEPKAEQVEKAEEENRS. The GYF domain maps to 534–582; the sequence is MQKWYYKDPQGEIQGPFNNQEMAEWFQAGYFTMSLLVKRACDESFQPLG. Residues 548 to 564 are required for GRB10-binding; that stretch reads GPFNNQEMAEWFQAGYF. The residue at position 594 (S594) is a Phosphoserine. 5 disordered regions span residues 732–794, 846–937, 958–998, 1011–1053, and 1090–1118; these read KAKA…QEEA, EEAA…SNTA, ERQL…SKPA, EARQ…SVWG, and KEVGPRNSTNKNKNNASLSKSVGVSNRQN. Residues 846–898 are compositionally biased toward basic and acidic residues; the sequence is EEAAKWAREEEEAQRRLEENRLRMEEEAARLRHEEEERKRKELELQRQKDLMR. The span at 899–924 shows a compositional bias: low complexity; it reads QRQQQQEALRRLQQQQQQQQLAQMKL. Residues 925 to 937 show a composition bias toward polar residues; the sequence is PSSSTWGQQSNTA. Over residues 958 to 973 the composition is skewed to basic and acidic residues; sequence ERQLREEQRRQQRELM. The span at 977–986 shows a compositional bias: low complexity; that stretch reads QQQQQQQQQQ. S995 carries the post-translational modification Phosphoserine. Positions 1015–1031 are enriched in low complexity; sequence MQKQQQQQQQQQQQHQQ. Residues 1032 to 1053 show a composition bias toward polar residues; the sequence is SNRARNSTHSNLHTSLGNSVWG. Residues 1096–1110 are compositionally biased toward low complexity; the sequence is NSTNKNKNNASLSKS. A Glycyl lysine isopeptide (Lys-Gly) (interchain with G-Cter in SUMO2) cross-link involves residue K1129. Disordered stretches follow at residues 1202-1223 and 1239-1263; these read AKQKVNQQRQQQQQQQQQQDSV and QSNNQQSNFEAVQSGKKKKKQKMVR. Over residues 1208-1220 the composition is skewed to low complexity; the sequence is QQRQQQQQQQQQQ. S1276 is subject to Phosphoserine.

The protein belongs to the GIGYF family. As to quaternary structure, component of the 4EHP-GYF2 complex, at least composed of EIF4E2, GIGYF2 and ZNF598. Interacts (via the 4EHP-binding motif) with EIF4E2; the interaction is direct. Interacts with ZFP36/TTP (via P-P-P-P-G repeats); the interaction is direct. Interacts with GRB10. Interacts (via DDX6 motif) with DDX6 (via RecA-like domain 2). Expressed in heart, liver, kidney and brain as well as in testis.

Its function is as follows. Key component of the 4EHP-GYF2 complex, a multiprotein complex that acts as a repressor of translation initiation. In the 4EHP-GYF2 complex, acts as a factor that bridges EIF4E2 to ZFP36/TTP, linking translation repression with mRNA decay. Also recruits and bridges the association of the 4EHP complex with the decapping effector protein DDX6, which is required for the ZFP36/TTP-mediated down-regulation of AU-rich mRNA. May act cooperatively with GRB10 to regulate tyrosine kinase receptor signaling, including IGF1 and insulin receptors. In association with EIF4E2, assists ribosome-associated quality control (RQC) by sequestering the mRNA cap, blocking ribosome initiation and decreasing the translational load on problematic messages. Part of a pathway that works in parallel to RQC-mediated degradation of the stalled nascent polypeptide. GIGYF2 and EIF4E2 work downstream and independently of ZNF598, which seems to work as a scaffold that can recruit them to faulty mRNA even if alternative recruitment mechanisms may exist. The chain is GRB10-interacting GYF protein 2 from Mus musculus (Mouse).